The primary structure comprises 332 residues: Serine, glycine, tyrosine and glutamine-rich protein (332 aa).

A signal peptide spans 1–17; the sequence is MMKTVLLLVVLVGVAYC. Residues 39–81 are disordered; the sequence is SSSSSSSSSSGGGGSSGGGASGGGGGGGSSGGGGASGGGGGGS. Residues 48–81 show a composition bias toward gly residues; that stretch reads SGGGGSSGGGASGGGGGGGSSGGGGASGGGGGGS.

In terms of tissue distribution, prismatic layer of shell (at protein level). Expressed primarily in the mantle with highest level in the mantle edge and lower level in the mantle pallium.

The protein resides in the secreted. The protein is Serine, glycine, tyrosine and glutamine-rich protein of Margaritifera margaritifera (Freshwater pearl mussel).